A 199-amino-acid chain; its full sequence is Charged multivesicular body protein 1b (199 aa).

Coiled coils occupy residues Asn-10–Ala-48 and Thr-178–Val-199. Residues Glu-167–Val-199 are disordered. The span at Gln-170–Ser-182 shows a compositional bias: polar residues. Positions Asp-186–Arg-196 match the MIT-interacting motif motif.

This sequence belongs to the SNF7 family. Probable peripherally associated component of the endosomal sorting required for transport complex III (ESCRT-III).

It is found in the cytoplasm. The protein resides in the cytosol. Its subcellular location is the endosome. The protein localises to the late endosome membrane. In terms of biological role, probable peripherally associated component of the endosomal sorting required for transport complex III (ESCRT-III) which is involved in multivesicular bodies (MVBs) formation and sorting of endosomal cargo proteins into MVBs. MVBs contain intraluminal vesicles (ILVs) that are generated by invagination and scission from the limiting membrane of the endosome and mostly are delivered to lysosomes enabling degradation of membrane proteins, such as stimulated growth factor receptors, lysosomal enzymes and lipids. This chain is Charged multivesicular body protein 1b (CHMP1B), found in Gallus gallus (Chicken).